The primary structure comprises 365 residues: tRNA 2-selenouridine synthase (365 aa).

Residues Phe15–Glu138 enclose the Rhodanese domain. Cys98 (S-selanylcysteine intermediate) is an active-site residue.

The protein belongs to the SelU family. In terms of assembly, monomer.

It carries out the reaction 5-methylaminomethyl-2-thiouridine(34) in tRNA + selenophosphate + (2E)-geranyl diphosphate + H2O + H(+) = 5-methylaminomethyl-2-selenouridine(34) in tRNA + (2E)-thiogeraniol + phosphate + diphosphate. The catalysed reaction is 5-methylaminomethyl-2-thiouridine(34) in tRNA + (2E)-geranyl diphosphate = 5-methylaminomethyl-S-(2E)-geranyl-thiouridine(34) in tRNA + diphosphate. The enzyme catalyses 5-methylaminomethyl-S-(2E)-geranyl-thiouridine(34) in tRNA + selenophosphate + H(+) = 5-methylaminomethyl-2-(Se-phospho)selenouridine(34) in tRNA + (2E)-thiogeraniol. It catalyses the reaction 5-methylaminomethyl-2-(Se-phospho)selenouridine(34) in tRNA + H2O = 5-methylaminomethyl-2-selenouridine(34) in tRNA + phosphate. In terms of biological role, involved in the post-transcriptional modification of the uridine at the wobble position (U34) of tRNA(Lys), tRNA(Glu) and tRNA(Gln). Catalyzes the conversion of 2-thiouridine (S2U-RNA) to 2-selenouridine (Se2U-RNA). Acts in a two-step process involving geranylation of 2-thiouridine (S2U) to S-geranyl-2-thiouridine (geS2U) and subsequent selenation of the latter derivative to 2-selenouridine (Se2U) in the tRNA chain. This Shewanella sp. (strain ANA-3) protein is tRNA 2-selenouridine synthase.